We begin with the raw amino-acid sequence, 438 residues long: Glutamyl-tRNA(Gln) amidotransferase subunit D (438 aa).

In terms of domain architecture, Asparaginase/glutaminase spans 92–422 (PDVTIIGTGG…EEVRRMMLTN (331 aa)). Residues Thr102, Thr178, Asp179, and Lys256 contribute to the active site.

This sequence belongs to the asparaginase 1 family. GatD subfamily. In terms of assembly, heterodimer of GatD and GatE.

It catalyses the reaction L-glutamyl-tRNA(Gln) + L-glutamine + ATP + H2O = L-glutaminyl-tRNA(Gln) + L-glutamate + ADP + phosphate + H(+). In terms of biological role, allows the formation of correctly charged Gln-tRNA(Gln) through the transamidation of misacylated Glu-tRNA(Gln) in organisms which lack glutaminyl-tRNA synthetase. The reaction takes place in the presence of glutamine and ATP through an activated gamma-phospho-Glu-tRNA(Gln). The GatDE system is specific for glutamate and does not act on aspartate. The protein is Glutamyl-tRNA(Gln) amidotransferase subunit D of Pyrococcus horikoshii (strain ATCC 700860 / DSM 12428 / JCM 9974 / NBRC 100139 / OT-3).